The following is a 541-amino-acid chain: uncharacterized protein (541 aa).

A signal peptide (tat-type signal) is located at residues 1–55 (MTKTVTRAGGASGPQQFQSGGETMKYEITRRRFLAASSAVLAAPAIVTMVRPARA). The interval 339–362 (RRSPSGISSPRSNRQPKAEALSAR) is disordered. Residues 341 to 351 (SPSGISSPRSN) show a composition bias toward low complexity. 4 helical membrane-spanning segments follow: residues 379-399 (AIVW…MVFM), 420-440 (LPVL…AHSG), 466-486 (LVSA…GEIA), and 500-520 (VGYF…LAVA).

This sequence belongs to the bacterial solute-binding protein 7 family. Post-translationally, predicted to be exported by the Tat system. The position of the signal peptide cleavage has not been experimentally proven.

It localises to the cell membrane. This is an uncharacterized protein from Sinorhizobium fredii (strain NBRC 101917 / NGR234).